The chain runs to 243 residues: Small ribosomal subunit protein uS3 (243 aa).

A KH type-2 domain is found at 39–107 (MRKFVMSELK…ETHLNIVEVR (69 aa)). A disordered region spans residues 214–243 (ASERRAMEGDAQGPASRDRDRDRDRRRDNA). The segment covering 229–243 (SRDRDRDRDRRRDNA) has biased composition (basic and acidic residues).

The protein belongs to the universal ribosomal protein uS3 family. As to quaternary structure, part of the 30S ribosomal subunit. Forms a tight complex with proteins S10 and S14.

In terms of biological role, binds the lower part of the 30S subunit head. Binds mRNA in the 70S ribosome, positioning it for translation. This Rhizobium johnstonii (strain DSM 114642 / LMG 32736 / 3841) (Rhizobium leguminosarum bv. viciae) protein is Small ribosomal subunit protein uS3.